The chain runs to 618 residues: UvrABC system protein C (618 aa).

The GIY-YIG domain maps to 13-92 (DKPGVYLMKN…IKKYRPKYNI (80 aa)). The 36-residue stretch at 204 to 239 (LDIVENFKLNMEKAAGNLEFEKAAMLRDKINIIEKI) folds into the UVR domain.

This sequence belongs to the UvrC family. In terms of assembly, interacts with UvrB in an incision complex.

It localises to the cytoplasm. In terms of biological role, the UvrABC repair system catalyzes the recognition and processing of DNA lesions. UvrC both incises the 5' and 3' sides of the lesion. The N-terminal half is responsible for the 3' incision and the C-terminal half is responsible for the 5' incision. The protein is UvrABC system protein C of Clostridium botulinum (strain 657 / Type Ba4).